The chain runs to 163 residues: UPF0262 protein RPE_4483 (163 aa).

The protein belongs to the UPF0262 family.

This Rhodopseudomonas palustris (strain BisA53) protein is UPF0262 protein RPE_4483.